The sequence spans 435 residues: Cyclic 2,3-diphosphoglycerate synthetase (435 aa).

It belongs to the cyclic 2,3-diphosphoglycerate synthetase family.

The protein resides in the cytoplasm. The catalysed reaction is (2R)-2,3-bisphosphoglycerate + ATP + H(+) = cyclic (2R)-2,3-bisphosphoglycerate + ADP + phosphate. Functionally, catalyzes the formation of cyclic 2,3-diphosphoglycerate (cDPG) by formation of an intramolecular phosphoanhydride bond at the expense of ATP. The polypeptide is Cyclic 2,3-diphosphoglycerate synthetase (Pyrococcus horikoshii (strain ATCC 700860 / DSM 12428 / JCM 9974 / NBRC 100139 / OT-3)).